We begin with the raw amino-acid sequence, 95 residues long: uncharacterized protein (95 aa).

Residues 29–53 (LVSTATCMAALFLRFKLIAWVAFIL) form a helical membrane-spanning segment.

The protein resides in the membrane. This is an uncharacterized protein from Schizosaccharomyces pombe (strain 972 / ATCC 24843) (Fission yeast).